A 187-amino-acid polypeptide reads, in one-letter code: Corticoliberin (187 aa).

The first 24 residues, 1 to 24 (MRLRLLVSAGMLLVALSPCLPCRA), serve as a signal peptide directing secretion. Positions 25–144 (LLSRGSVSGA…HQGALERERR (120 aa)) are excised as a propeptide. A disordered region spans residues 75–95 (AARLSPNSTPLTAGRGSRPSH). Isoleucine amide is present on Ile-185.

This sequence belongs to the sauvagine/corticotropin-releasing factor/urotensin I family. In terms of assembly, interacts (via C-terminus) with CRFR1 (via N-terminal extracellular domain). In terms of tissue distribution, produced by the hypothalamus.

The protein localises to the secreted. In terms of biological role, hormone regulating the release of corticotropin from pituitary gland. Induces NLRP6 in intestinal epithelial cells, hence may influence gut microbiota profile. The polypeptide is Corticoliberin (Crh) (Rattus norvegicus (Rat)).